The following is a 314-amino-acid chain: MEWSEVEVHTTNEAVEPVANVLTEFGAAGVSIEDVADFLREREDKFGEIYALRREDYPEDGVIIKAYFLKTTEFVEQIPEIEQTLKNLSTFDIPLGNFQFVVNDVDDEEWATAWKKYYHPVQITDRITIVPSWESYTPSANEIIIELDPGMAFGTGTHPTTQLCIRALSDYLQPGDEVIDVGTGSGVLSIASAKLGAKSILATDLDEIATRAAEENITLNKTEHIITVKQNNLLQDINKTDVDIVVANILAEVILLFPEDVYRALKPGGIFIASGIIEDKAKVVEEALKKAGLVIEKMEQQGDWVAIISKRGVE.

S-adenosyl-L-methionine contacts are provided by Thr-161, Gly-182, Asp-204, and Asn-248.

The protein belongs to the methyltransferase superfamily. PrmA family.

The protein localises to the cytoplasm. It catalyses the reaction L-lysyl-[protein] + 3 S-adenosyl-L-methionine = N(6),N(6),N(6)-trimethyl-L-lysyl-[protein] + 3 S-adenosyl-L-homocysteine + 3 H(+). Methylates ribosomal protein L11. This Listeria monocytogenes serotype 4b (strain CLIP80459) protein is Ribosomal protein L11 methyltransferase.